The primary structure comprises 476 residues: Methylenetetrahydrofolate--tRNA-(uracil-5-)-methyltransferase TrmFO (476 aa).

13–18 is an FAD binding site; it reads GGGLAG. Positions 425 to 446 are disordered; the sequence is PPLESPPTHGADGKKLRGPDKT. Over residues 435-446 the composition is skewed to basic and acidic residues; that stretch reads ADGKKLRGPDKT.

Belongs to the MnmG family. TrmFO subfamily. FAD is required as a cofactor.

The protein resides in the cytoplasm. It catalyses the reaction uridine(54) in tRNA + (6R)-5,10-methylene-5,6,7,8-tetrahydrofolate + NADH + H(+) = 5-methyluridine(54) in tRNA + (6S)-5,6,7,8-tetrahydrofolate + NAD(+). It carries out the reaction uridine(54) in tRNA + (6R)-5,10-methylene-5,6,7,8-tetrahydrofolate + NADPH + H(+) = 5-methyluridine(54) in tRNA + (6S)-5,6,7,8-tetrahydrofolate + NADP(+). In terms of biological role, catalyzes the folate-dependent formation of 5-methyl-uridine at position 54 (M-5-U54) in all tRNAs. This is Methylenetetrahydrofolate--tRNA-(uracil-5-)-methyltransferase TrmFO from Rhodopseudomonas palustris (strain BisB18).